The following is a 253-amino-acid chain: MRVADSIMKKSIGLVGDTGRMGVLLTQALLCRPHCFLGKGFSRRSQTSLEEVVTENDILIDFSSPEVTSLLLDFLLKTPRPVIIGTTGFTNDSGVKTKLSALSEYVPVVVCANTSLGAYVQKRLAAFAAKLFSTSYDVRILETHHRAKADAISGTAISLAEAIRSAKAESYEEEPEPFIEMHGSRLGNVCGEHEVSFVGEDERFVIRHEVFSRRVFSGGVLLILEKIMGEGLPKGYYTSDVLYESLFQEKVFG.

16–21 (GDTGRM) is an NAD(+) binding site. R44 contributes to the NADP(+) binding site. Residues 85-87 (GTT) and 111-114 (CANT) contribute to the NAD(+) site. The active-site Proton donor/acceptor is the H144. H145 serves as a coordination point for (S)-2,3,4,5-tetrahydrodipicolinate. The active-site Proton donor is the K148. 154–155 (GT) is a (S)-2,3,4,5-tetrahydrodipicolinate binding site.

It belongs to the DapB family.

It localises to the cytoplasm. It catalyses the reaction (S)-2,3,4,5-tetrahydrodipicolinate + NAD(+) + H2O = (2S,4S)-4-hydroxy-2,3,4,5-tetrahydrodipicolinate + NADH + H(+). The enzyme catalyses (S)-2,3,4,5-tetrahydrodipicolinate + NADP(+) + H2O = (2S,4S)-4-hydroxy-2,3,4,5-tetrahydrodipicolinate + NADPH + H(+). It functions in the pathway amino-acid biosynthesis; L-lysine biosynthesis via DAP pathway; (S)-tetrahydrodipicolinate from L-aspartate: step 4/4. Functionally, catalyzes the conversion of 4-hydroxy-tetrahydrodipicolinate (HTPA) to tetrahydrodipicolinate. The sequence is that of 4-hydroxy-tetrahydrodipicolinate reductase from Chlamydia trachomatis serovar A (strain ATCC VR-571B / DSM 19440 / HAR-13).